The primary structure comprises 180 residues: Large ribosomal subunit protein uL6 (180 aa).

Belongs to the universal ribosomal protein uL6 family. As to quaternary structure, part of the 50S ribosomal subunit.

Its function is as follows. This protein binds to the 23S rRNA, and is important in its secondary structure. It is located near the subunit interface in the base of the L7/L12 stalk, and near the tRNA binding site of the peptidyltransferase center. The sequence is that of Large ribosomal subunit protein uL6 from Borrelia hermsii (strain HS1 / DAH).